A 398-amino-acid polypeptide reads, in one-letter code: UDP-N-acetylglucosamine--N-acetylmuramyl-(pentapeptide) pyrophosphoryl-undecaprenol N-acetylglucosamine transferase (398 aa).

Residues 11–13 (TGG), asparagine 124, arginine 164, serine 192, and glutamine 318 contribute to the UDP-N-acetyl-alpha-D-glucosamine site.

The protein belongs to the glycosyltransferase 28 family. MurG subfamily.

The protein localises to the cell membrane. It carries out the reaction di-trans,octa-cis-undecaprenyl diphospho-N-acetyl-alpha-D-muramoyl-L-alanyl-D-glutamyl-meso-2,6-diaminopimeloyl-D-alanyl-D-alanine + UDP-N-acetyl-alpha-D-glucosamine = di-trans,octa-cis-undecaprenyl diphospho-[N-acetyl-alpha-D-glucosaminyl-(1-&gt;4)]-N-acetyl-alpha-D-muramoyl-L-alanyl-D-glutamyl-meso-2,6-diaminopimeloyl-D-alanyl-D-alanine + UDP + H(+). It functions in the pathway cell wall biogenesis; peptidoglycan biosynthesis. In terms of biological role, cell wall formation. Catalyzes the transfer of a GlcNAc subunit on undecaprenyl-pyrophosphoryl-MurNAc-pentapeptide (lipid intermediate I) to form undecaprenyl-pyrophosphoryl-MurNAc-(pentapeptide)GlcNAc (lipid intermediate II). The polypeptide is UDP-N-acetylglucosamine--N-acetylmuramyl-(pentapeptide) pyrophosphoryl-undecaprenol N-acetylglucosamine transferase (Deinococcus radiodurans (strain ATCC 13939 / DSM 20539 / JCM 16871 / CCUG 27074 / LMG 4051 / NBRC 15346 / NCIMB 9279 / VKM B-1422 / R1)).